A 309-amino-acid chain; its full sequence is Tagatose-6-phosphate kinase (309 aa).

This sequence belongs to the carbohydrate kinase PfkB family. LacC subfamily.

It carries out the reaction D-tagatofuranose 6-phosphate + ATP = D-tagatofuranose 1,6-bisphosphate + ADP + H(+). The protein operates within carbohydrate metabolism; D-tagatose 6-phosphate degradation; D-glyceraldehyde 3-phosphate and glycerone phosphate from D-tagatose 6-phosphate: step 1/2. The sequence is that of Tagatose-6-phosphate kinase from Streptococcus pneumoniae serotype 19F (strain G54).